A 192-amino-acid chain; its full sequence is Thymidylate kinase (192 aa).

Residue 7-14 (GIDCVGKS) participates in ATP binding.

This sequence belongs to the thymidylate kinase family.

The enzyme catalyses dTMP + ATP = dTDP + ADP. Functionally, phosphorylation of dTMP to form dTDP in both de novo and salvage pathways of dTTP synthesis. The protein is Thymidylate kinase (tmk) of Campylobacter jejuni subsp. jejuni serotype O:2 (strain ATCC 700819 / NCTC 11168).